The chain runs to 272 residues: 3-methyl-2-oxobutanoate hydroxymethyltransferase (272 aa).

2 residues coordinate Mg(2+): Asp-42 and Asp-86. 3-methyl-2-oxobutanoate contacts are provided by residues 42–43 (DS), Asp-86, and Lys-116. Glu-118 provides a ligand contact to Mg(2+). Glu-185 functions as the Proton acceptor in the catalytic mechanism.

This sequence belongs to the PanB family. In terms of assembly, homodecamer; pentamer of dimers. It depends on Mg(2+) as a cofactor.

It is found in the cytoplasm. It catalyses the reaction 3-methyl-2-oxobutanoate + (6R)-5,10-methylene-5,6,7,8-tetrahydrofolate + H2O = 2-dehydropantoate + (6S)-5,6,7,8-tetrahydrofolate. It participates in cofactor biosynthesis; (R)-pantothenate biosynthesis; (R)-pantoate from 3-methyl-2-oxobutanoate: step 1/2. In terms of biological role, catalyzes the reversible reaction in which hydroxymethyl group from 5,10-methylenetetrahydrofolate is transferred onto alpha-ketoisovalerate to form ketopantoate. The polypeptide is 3-methyl-2-oxobutanoate hydroxymethyltransferase (Prochlorococcus marinus (strain MIT 9313)).